The primary structure comprises 110 residues: V-type proton ATPase subunit G1 (110 aa).

N-acetylmethionine is present on methionine 1. Residues 60 to 80 form a disordered region; it reads KLEETSGDSGANVKRLEQETD.

It belongs to the V-ATPase G subunit family. V-ATPase is a heteromultimeric enzyme composed of a peripheral catalytic V1 complex (components A to H) attached to an integral membrane V0 proton pore complex (components: a, c, c'', d and e).

Its subcellular location is the cell membrane. It is found in the vacuole membrane. Its function is as follows. Catalytic subunit of the peripheral V1 complex of vacuolar ATPase (V-ATPase). V-ATPase is responsible for acidifying a variety of intracellular compartments in eukaryotic cells. In Arabidopsis thaliana (Mouse-ear cress), this protein is V-type proton ATPase subunit G1 (VHA-G1).